The following is a 347-amino-acid chain: Uroporphyrinogen decarboxylase (347 aa).

Residues 24-28 (RQAGR), F42, D73, Y150, T205, and H320 contribute to the substrate site.

This sequence belongs to the uroporphyrinogen decarboxylase family. As to quaternary structure, homodimer.

It localises to the cytoplasm. The enzyme catalyses uroporphyrinogen III + 4 H(+) = coproporphyrinogen III + 4 CO2. It functions in the pathway porphyrin-containing compound metabolism; protoporphyrin-IX biosynthesis; coproporphyrinogen-III from 5-aminolevulinate: step 4/4. Functionally, catalyzes the decarboxylation of four acetate groups of uroporphyrinogen-III to yield coproporphyrinogen-III. This chain is Uroporphyrinogen decarboxylase, found in Gloeobacter violaceus (strain ATCC 29082 / PCC 7421).